Here is a 265-residue protein sequence, read N- to C-terminus: Hydroxyethylthiazole kinase 2 (265 aa).

Met39 is a binding site for substrate. ATP contacts are provided by Lys115 and Thr168. Gly195 contributes to the substrate binding site.

This sequence belongs to the Thz kinase family. The cofactor is Mg(2+).

The enzyme catalyses 5-(2-hydroxyethyl)-4-methylthiazole + ATP = 4-methyl-5-(2-phosphooxyethyl)-thiazole + ADP + H(+). It functions in the pathway cofactor biosynthesis; thiamine diphosphate biosynthesis; 4-methyl-5-(2-phosphoethyl)-thiazole from 5-(2-hydroxyethyl)-4-methylthiazole: step 1/1. Functionally, catalyzes the phosphorylation of the hydroxyl group of 4-methyl-5-beta-hydroxyethylthiazole (THZ). The protein is Hydroxyethylthiazole kinase 2 of Clostridium botulinum (strain Okra / Type B1).